The sequence spans 446 residues: Phosphoglucosamine mutase (446 aa).

S101 serves as the catalytic Phosphoserine intermediate. Mg(2+)-binding residues include S101, D240, D242, and D244. S101 is subject to Phosphoserine.

Belongs to the phosphohexose mutase family. Mg(2+) serves as cofactor. Activated by phosphorylation.

The catalysed reaction is alpha-D-glucosamine 1-phosphate = D-glucosamine 6-phosphate. Functionally, catalyzes the conversion of glucosamine-6-phosphate to glucosamine-1-phosphate. This Pseudomonas entomophila (strain L48) protein is Phosphoglucosamine mutase.